We begin with the raw amino-acid sequence, 218 residues long: rRNA methyltransferase 2, mitochondrial (218 aa).

S-adenosyl-L-methionine is bound by residues 59 to 62, aspartate 80, 96 to 97, and aspartate 133; these read PGSW and DI. Residue lysine 173 is the Proton acceptor of the active site.

The protein belongs to the class I-like SAM-binding methyltransferase superfamily. RNA methyltransferase RlmE family.

The protein resides in the mitochondrion. The enzyme catalyses a uridine in 21S rRNA + S-adenosyl-L-methionine = a 2'-O-methyluridine in 21S rRNA + S-adenosyl-L-homocysteine + H(+). Functionally, S-adenosyl-L-methionine-dependent 2'-O-ribose methyltransferase that catalyzes the formation of the 2'-O-methyluridine corresponding to position 2791 in S.cerevisiae 21S mitochondrial large subunit ribosomal RNA (mtLSU rRNA), a universally conserved modification in the peptidyl transferase domain of the mtLSU rRNA. This is rRNA methyltransferase 2, mitochondrial from Schizosaccharomyces pombe (strain 972 / ATCC 24843) (Fission yeast).